Reading from the N-terminus, the 310-residue chain is Tryptophan 2,3-dioxygenase (310 aa).

The segment at 1-39 (MQPPGNDAPAGCPFSGARAQGTQAAHEAPHVPGDAGEQA) is disordered. Substrate is bound by residues 79 to 83 (FIIQH), Tyr141, and Arg145. His268 provides a ligand contact to heme. A substrate-binding site is contributed by Thr282.

This sequence belongs to the tryptophan 2,3-dioxygenase family. Homotetramer. Requires heme as cofactor.

It carries out the reaction L-tryptophan + O2 = N-formyl-L-kynurenine. Its pathway is amino-acid degradation; L-tryptophan degradation via kynurenine pathway; L-kynurenine from L-tryptophan: step 1/2. Its function is as follows. Heme-dependent dioxygenase that catalyzes the oxidative cleavage of the L-tryptophan (L-Trp) pyrrole ring and converts L-tryptophan to N-formyl-L-kynurenine. Catalyzes the oxidative cleavage of the indole moiety. The sequence is that of Tryptophan 2,3-dioxygenase from Burkholderia multivorans (strain ATCC 17616 / 249).